Reading from the N-terminus, the 66-residue chain is Large ribosomal subunit protein uL29 (66 aa).

This sequence belongs to the universal ribosomal protein uL29 family.

The polypeptide is Large ribosomal subunit protein uL29 (Agrobacterium fabrum (strain C58 / ATCC 33970) (Agrobacterium tumefaciens (strain C58))).